The chain runs to 82 residues: MNKPVHNNEHRRKRFNKKCPFVSAGWKTIDYKDTETLKKFITERGKILPRRITGVSSRFQGILTLAIKRARHIGFLPFVGED.

Belongs to the bacterial ribosomal protein bS18 family. Part of the 30S ribosomal subunit. Forms a tight heterodimer with protein bS6.

In terms of biological role, binds as a heterodimer with protein bS6 to the central domain of the 16S rRNA, where it helps stabilize the platform of the 30S subunit. This is Small ribosomal subunit protein bS18 from Chlamydia felis (strain Fe/C-56) (Chlamydophila felis).